We begin with the raw amino-acid sequence, 560 residues long: SET domain-containing protein 4 (560 aa).

Disordered stretches follow at residues 1 to 61 (MTSP…PSPQ) and 125 to 157 (KKQN…AEDN). Over residues 26–38 (SRSSSYSSNSSMS) the composition is skewed to low complexity. The span at 47–59 (LSVSSAASETLPS) shows a compositional bias: polar residues. The segment covering 141–157 (ESSKENKITPSMRAEDN) has biased composition (basic and acidic residues). The PHD-type zinc finger occupies 160 to 210 (KNGCICGSSDSKDELFIQCNKCKTWQHKLCYAFKKSDPIKRDFVCKRCDSD). An SET domain is found at 346-475 (ADIEVRKSSN…KGEEISVEWQ (130 aa)).

Belongs to the SET3 family.

Putative chromatin regulator. The sequence is that of SET domain-containing protein 4 (SET4) from Saccharomyces cerevisiae (strain ATCC 204508 / S288c) (Baker's yeast).